Consider the following 284-residue polypeptide: D-tagatose-1,6-bisphosphate aldolase subunit GatY (284 aa).

The Proton donor role is filled by D82. H83 and H180 together coordinate Zn(2+). G181 is a binding site for dihydroxyacetone phosphate. Residue H208 participates in Zn(2+) binding. Residues 209 to 211 and 230 to 233 contribute to the dihydroxyacetone phosphate site; these read GAS and NVAT.

It belongs to the class II fructose-bisphosphate aldolase family. TagBP aldolase GatY subfamily. As to quaternary structure, forms a complex with GatZ. The cofactor is Zn(2+).

It catalyses the reaction D-tagatofuranose 1,6-bisphosphate = D-glyceraldehyde 3-phosphate + dihydroxyacetone phosphate. It functions in the pathway carbohydrate metabolism; D-tagatose 6-phosphate degradation; D-glyceraldehyde 3-phosphate and glycerone phosphate from D-tagatose 6-phosphate: step 2/2. In terms of biological role, catalytic subunit of the tagatose-1,6-bisphosphate aldolase GatYZ, which catalyzes the reversible aldol condensation of dihydroxyacetone phosphate (DHAP or glycerone-phosphate) with glyceraldehyde 3-phosphate (G3P) to produce tagatose 1,6-bisphosphate (TBP). Requires GatZ subunit for full activity and stability. Is involved in the catabolism of galactitol. This Salmonella enteritidis PT4 (strain P125109) protein is D-tagatose-1,6-bisphosphate aldolase subunit GatY.